Consider the following 254-residue polypeptide: Putative cysteine-rich repeat secretory protein 37 (254 aa).

The first 29 residues, Met1–Ser29, serve as a signal peptide directing secretion. Gnk2-homologous domains are found at residues Tyr36–Ser138 and Tyr145–Phe251.

It belongs to the cysteine-rich repeat secretory protein family.

The protein resides in the secreted. This is Putative cysteine-rich repeat secretory protein 37 (CRRSP37) from Arabidopsis thaliana (Mouse-ear cress).